Consider the following 538-residue polypeptide: Capsular polysaccharide biosynthesis protein RkpI (538 aa).

6 consecutive transmembrane segments (helical) span residues 16–36, 70–90, 114–134, 139–159, 170–190, and 212–232; these read LHDY…AVIF, VIAL…YAAA, LVFS…IFYA, IVFW…YMYF, LFWV…LFYG, and NTVR…WLGV.

Its subcellular location is the cell membrane. Its pathway is capsule biogenesis; capsule polysaccharide biosynthesis. Its function is as follows. Involved in antigen K (capsular polysaccharide) biosynthesis. This chain is Capsular polysaccharide biosynthesis protein RkpI (rkpI), found in Rhizobium meliloti (strain 1021) (Ensifer meliloti).